The sequence spans 324 residues: Lipoyl synthase (324 aa).

Cys-72, Cys-77, Cys-83, Cys-98, Cys-102, Cys-105, and Ser-313 together coordinate [4Fe-4S] cluster. One can recognise a Radical SAM core domain in the interval 84–302; that stretch reads FRFGTASFMI…AQEGKKMGFL (219 aa).

The protein belongs to the radical SAM superfamily. Lipoyl synthase family. Requires [4Fe-4S] cluster as cofactor.

It localises to the cytoplasm. It catalyses the reaction [[Fe-S] cluster scaffold protein carrying a second [4Fe-4S](2+) cluster] + N(6)-octanoyl-L-lysyl-[protein] + 2 oxidized [2Fe-2S]-[ferredoxin] + 2 S-adenosyl-L-methionine + 4 H(+) = [[Fe-S] cluster scaffold protein] + N(6)-[(R)-dihydrolipoyl]-L-lysyl-[protein] + 4 Fe(3+) + 2 hydrogen sulfide + 2 5'-deoxyadenosine + 2 L-methionine + 2 reduced [2Fe-2S]-[ferredoxin]. It functions in the pathway protein modification; protein lipoylation via endogenous pathway; protein N(6)-(lipoyl)lysine from octanoyl-[acyl-carrier-protein]: step 2/2. In terms of biological role, catalyzes the radical-mediated insertion of two sulfur atoms into the C-6 and C-8 positions of the octanoyl moiety bound to the lipoyl domains of lipoate-dependent enzymes, thereby converting the octanoylated domains into lipoylated derivatives. The protein is Lipoyl synthase of Dichelobacter nodosus (strain VCS1703A).